Here is a 434-residue protein sequence, read N- to C-terminus: Tryptophan--tRNA ligase (434 aa).

Residues 14–16 (TTS) and 22–23 (GN) each bind ATP. The 'HIGH' region motif lies at 15 to 23 (TSGTPHLGN). Asp-147 contacts L-tryptophan. ATP contacts are provided by residues 159–161 (GRD), Leu-199, and 206–210 (KMSKS). Positions 206 to 210 (KMSKS) match the 'KMSKS' region motif.

Belongs to the class-I aminoacyl-tRNA synthetase family. Homodimer.

It localises to the cytoplasm. It catalyses the reaction tRNA(Trp) + L-tryptophan + ATP = L-tryptophyl-tRNA(Trp) + AMP + diphosphate + H(+). Catalyzes the attachment of tryptophan to tRNA(Trp). In Xylella fastidiosa (strain 9a5c), this protein is Tryptophan--tRNA ligase.